Here is a 220-residue protein sequence, read N- to C-terminus: Large ribosomal subunit protein uL3 (220 aa).

Positions 61–81 (KGSKSNKYANKPAEGHAKKAD) are disordered.

The protein belongs to the universal ribosomal protein uL3 family. In terms of assembly, part of the 50S ribosomal subunit. Forms a cluster with proteins L14 and L19.

Functionally, one of the primary rRNA binding proteins, it binds directly near the 3'-end of the 23S rRNA, where it nucleates assembly of the 50S subunit. The protein is Large ribosomal subunit protein uL3 of Staphylococcus epidermidis (strain ATCC 12228 / FDA PCI 1200).